Here is a 201-residue protein sequence, read N- to C-terminus: Fas apoptotic inhibitory molecule 1 (201 aa).

Belongs to the FAIM1 family.

The protein localises to the cytoplasm. Plays a role as an inducible effector molecule that mediates Fas resistance produced by surface Ig engagement in B cells. The chain is Fas apoptotic inhibitory molecule 1 (Faim) from Rattus norvegicus (Rat).